We begin with the raw amino-acid sequence, 279 residues long: Zinc-finger homeodomain protein 1 (279 aa).

Over residues 1–30 (MEFEDNNNNNDEEQEEDMNLHEEEEDDDAV) the composition is skewed to acidic residues. Residues 1 to 62 (MEFEDNNNNN…TTSTGGGGGF (62 aa)) form a disordered region. The ZF-HD dimerization-type zinc-finger motif lies at 75–124 (FRECLKNQAVNIGGHAVDGCGEFMPAGIEGTIDALKCAACGCHRNFHRKE). 2 disordered regions span residues 128–199 (FHHA…TKFT) and 245–279 (NNKH…QDQP). A compositionally biased stretch (pro residues) spans 134–143 (QHQPPPPPPG). A DNA-binding region (homeobox; atypical) is located at residues 191 to 254 (RKRHRTKFTA…NNKHTLGKSP (64 aa)).

Homo- and heterodimer with other ZFHD proteins. Interacts with MIF1 and MIF2; these interactions prevent nuclear localization and DNA-binding to inhibit transcription regulation activity. Binds to ZHD2, ZHD3, ZHD4, ZHD5, ZHD6, ZHD7, ZHD8, ZHD9, ZHD10 and ZHD11. Mostly expressed in flowers and inflorescence.

The protein resides in the nucleus. Functionally, putative transcription factor. The chain is Zinc-finger homeodomain protein 1 (ZHD1) from Arabidopsis thaliana (Mouse-ear cress).